The chain runs to 146 residues: Large ribosomal subunit protein uL15 (146 aa).

A disordered region spans residues 1-46 (MLHQIKPFKGARKTVKRLGRGCGSGTGKTSGKGHKGQLARSGGGVR). Over residues 9 to 19 (KGARKTVKRLG) the composition is skewed to basic residues. Gly residues predominate over residues 20 to 30 (RGCGSGTGKTS).

This sequence belongs to the universal ribosomal protein uL15 family. Part of the 50S ribosomal subunit.

Binds to the 23S rRNA. This is Large ribosomal subunit protein uL15 from Phytoplasma mali (strain AT).